We begin with the raw amino-acid sequence, 65 residues long: Sperm protamine P1 (65 aa).

The disordered stretch occupies residues 1–65; sequence MARYRHSRSR…RYSRRRRRRY (65 aa).

The protein belongs to the protamine P1 family. As to expression, testis.

It is found in the nucleus. Its subcellular location is the chromosome. Its function is as follows. Protamines substitute for histones in the chromatin of sperm during the haploid phase of spermatogenesis. They compact sperm DNA into a highly condensed, stable and inactive complex. In Lagorchestes hirsutus (Rufous hare-wallaby), this protein is Sperm protamine P1 (PRM1).